The chain runs to 348 residues: Phosphoribosylformylglycinamidine cyclo-ligase (348 aa).

It belongs to the AIR synthase family.

The protein localises to the cytoplasm. The catalysed reaction is 2-formamido-N(1)-(5-O-phospho-beta-D-ribosyl)acetamidine + ATP = 5-amino-1-(5-phospho-beta-D-ribosyl)imidazole + ADP + phosphate + H(+). It participates in purine metabolism; IMP biosynthesis via de novo pathway; 5-amino-1-(5-phospho-D-ribosyl)imidazole from N(2)-formyl-N(1)-(5-phospho-D-ribosyl)glycinamide: step 2/2. The sequence is that of Phosphoribosylformylglycinamidine cyclo-ligase from Roseobacter denitrificans (strain ATCC 33942 / OCh 114) (Erythrobacter sp. (strain OCh 114)).